A 229-amino-acid polypeptide reads, in one-letter code: Urease accessory protein UreF (229 aa).

This sequence belongs to the UreF family. As to quaternary structure, ureD, UreF and UreG form a complex that acts as a GTP-hydrolysis-dependent molecular chaperone, activating the urease apoprotein by helping to assemble the nickel containing metallocenter of UreC. The UreE protein probably delivers the nickel.

Its subcellular location is the cytoplasm. Its function is as follows. Required for maturation of urease via the functional incorporation of the urease nickel metallocenter. In Corynebacterium efficiens (strain DSM 44549 / YS-314 / AJ 12310 / JCM 11189 / NBRC 100395), this protein is Urease accessory protein UreF.